The sequence spans 296 residues: Peroxidase P7 (296 aa).

Residue Gln1 is modified to Pyrrolidone carboxylic acid. Cystine bridges form between Cys11-Cys91, Cys44-Cys49, Cys97-Cys292, and Cys176-Cys201. His42 serves as the catalytic Proton acceptor. The Ca(2+) site is built by Asp43, Val46, Gly48, Asp50, and Ser52. Residue Pro139 participates in substrate binding. His169 is a heme b binding site. Thr170 serves as a coordination point for Ca(2+). Asn185 carries N-linked (GlcNAc...) asparagine glycosylation. Ca(2+) contacts are provided by Asp216, Ser219, and Asp224.

The protein belongs to the peroxidase family. Classical plant (class III) peroxidase subfamily. Ca(2+) serves as cofactor. It depends on heme b as a cofactor.

It carries out the reaction 2 a phenolic donor + H2O2 = 2 a phenolic radical donor + 2 H2O. In terms of biological role, removal of H(2)O(2), oxidation of toxic reductants, biosynthesis and degradation of lignin, suberization, auxin catabolism, response to environmental stresses such as wounding, pathogen attack and oxidative stress. These functions might be dependent on each isozyme/isoform in each plant tissue. The sequence is that of Peroxidase P7 from Brassica rapa subsp. rapa (Turnip).